The primary structure comprises 462 residues: WD repeat-containing protein WRAP73 (462 aa).

WD repeat units lie at residues 46–86 (TCLD…WHCK), 89–129 (EGSA…VSYI), 176–210 (TDTQ…YSLD), and 221–260 (EWSL…MITE). Serine 281 carries the post-translational modification Phosphoserine. WD repeat units follow at residues 328 to 369 (NPRM…LFVV) and 371 to 410 (EHMS…SVQV).

Interacts with SSX2IP. In terms of tissue distribution, ubiquitous.

It localises to the cytoplasm. It is found in the cytoskeleton. Its subcellular location is the microtubule organizing center. The protein resides in the centrosome. Functionally, the SSX2IP:WRAP73 complex is proposed to act as regulator of spindle anchoring at the mitotic centrosome. Required for the centrosomal localization of SSX2IP and normal mitotic bipolar spindle morphology. Required for the targeting of centriole satellite proteins to centrosomes such as of PCM1, SSX2IP, CEP290 and PIBF1/CEP90. Required for ciliogenesis and involved in the removal of the CEP97:CCP110 complex from the mother centriole. Involved in ciliary vesicle formation at the mother centriole and required for the docking of vesicles to the basal body during ciliogenesis; may promote docking of RAB8A- and ARL13B-containing vesicles. This is WD repeat-containing protein WRAP73 (Wrap73) from Mus musculus (Mouse).